A 191-amino-acid polypeptide reads, in one-letter code: Leucyl/phenylalanyl-tRNA--protein transferase (191 aa).

This sequence belongs to the L/F-transferase family.

It is found in the cytoplasm. The catalysed reaction is N-terminal L-lysyl-[protein] + L-leucyl-tRNA(Leu) = N-terminal L-leucyl-L-lysyl-[protein] + tRNA(Leu) + H(+). The enzyme catalyses N-terminal L-arginyl-[protein] + L-leucyl-tRNA(Leu) = N-terminal L-leucyl-L-arginyl-[protein] + tRNA(Leu) + H(+). It carries out the reaction L-phenylalanyl-tRNA(Phe) + an N-terminal L-alpha-aminoacyl-[protein] = an N-terminal L-phenylalanyl-L-alpha-aminoacyl-[protein] + tRNA(Phe). In terms of biological role, functions in the N-end rule pathway of protein degradation where it conjugates Leu, Phe and, less efficiently, Met from aminoacyl-tRNAs to the N-termini of proteins containing an N-terminal arginine or lysine. In Herpetosiphon aurantiacus (strain ATCC 23779 / DSM 785 / 114-95), this protein is Leucyl/phenylalanyl-tRNA--protein transferase.